The sequence spans 76 residues: Kappa-actitoxin-Avd4d (76 aa).

A signal peptide spans 1 to 19; that stretch reads MNKALFLCLVVLCAAVVFA. Residues 20 to 31 constitute a propeptide that is removed on maturation; it reads AEDLQKAKHVPF. Cystine bridges form between Cys-37–Cys-72, Cys-39–Cys-65, and Cys-55–Cys-73.

It belongs to the sea anemone type 3 (BDS) potassium channel toxin family. As to expression, moderately expressed in the ectodermal tissue from the distal and proximal tentacles, body wall, and oral disk.

The protein localises to the secreted. Its subcellular location is the nematocyst. In terms of biological role, blocks Kv3 voltage-gated potassium channels. Reduces blood pressure. This Anemonia viridis (Snakelocks anemone) protein is Kappa-actitoxin-Avd4d.